Here is a 118-residue protein sequence, read N- to C-terminus: Ribonuclease P protein component (118 aa).

This sequence belongs to the RnpA family. Consists of a catalytic RNA component (M1 or rnpB) and a protein subunit.

The catalysed reaction is Endonucleolytic cleavage of RNA, removing 5'-extranucleotides from tRNA precursor.. Functionally, RNaseP catalyzes the removal of the 5'-leader sequence from pre-tRNA to produce the mature 5'-terminus. It can also cleave other RNA substrates such as 4.5S RNA. The protein component plays an auxiliary but essential role in vivo by binding to the 5'-leader sequence and broadening the substrate specificity of the ribozyme. In Rickettsia felis (strain ATCC VR-1525 / URRWXCal2) (Rickettsia azadi), this protein is Ribonuclease P protein component.